A 77-amino-acid polypeptide reads, in one-letter code: Acyl carrier protein (77 aa).

One can recognise a Carrier domain in the interval Ser-2 to Ser-77. Ser-37 carries the O-(pantetheine 4'-phosphoryl)serine modification.

The protein belongs to the acyl carrier protein (ACP) family. In terms of processing, 4'-phosphopantetheine is transferred from CoA to a specific serine of apo-ACP by AcpS. This modification is essential for activity because fatty acids are bound in thioester linkage to the sulfhydryl of the prosthetic group.

The protein resides in the cytoplasm. It functions in the pathway lipid metabolism; fatty acid biosynthesis. In terms of biological role, carrier of the growing fatty acid chain in fatty acid biosynthesis. This is Acyl carrier protein from Alcanivorax borkumensis (strain ATCC 700651 / DSM 11573 / NCIMB 13689 / SK2).